A 257-amino-acid polypeptide reads, in one-letter code: Acetylglutamate kinase (257 aa).

Residues 40–41, R62, and N155 each bind substrate; that span reads GG.

Belongs to the acetylglutamate kinase family. ArgB subfamily.

It is found in the cytoplasm. The catalysed reaction is N-acetyl-L-glutamate + ATP = N-acetyl-L-glutamyl 5-phosphate + ADP. Its pathway is amino-acid biosynthesis; L-arginine biosynthesis; N(2)-acetyl-L-ornithine from L-glutamate: step 2/4. Catalyzes the ATP-dependent phosphorylation of N-acetyl-L-glutamate. In Shouchella clausii (strain KSM-K16) (Alkalihalobacillus clausii), this protein is Acetylglutamate kinase.